A 133-amino-acid polypeptide reads, in one-letter code: Peptide methionine sulfoxide reductase MsrB (133 aa).

Residues 1–12 show a composition bias toward basic and acidic residues; that stretch reads MSEKVQKSEHEW. Residues 1-36 are disordered; that stretch reads MSEKVQKSEHEWQQQLTPEQYRVTREKGTERPFTGD. In terms of domain architecture, MsrB spans 9–132; that stretch reads EHEWQQQLTP…NSVSLDFHPG (124 aa). Residues Cys48, Cys51, Cys97, and Cys100 each coordinate Zn(2+). Cys121 (nucleophile) is an active-site residue.

The protein belongs to the MsrB Met sulfoxide reductase family. The cofactor is Zn(2+).

It carries out the reaction L-methionyl-[protein] + [thioredoxin]-disulfide + H2O = L-methionyl-(R)-S-oxide-[protein] + [thioredoxin]-dithiol. The polypeptide is Peptide methionine sulfoxide reductase MsrB (Chromohalobacter salexigens (strain ATCC BAA-138 / DSM 3043 / CIP 106854 / NCIMB 13768 / 1H11)).